A 278-amino-acid polypeptide reads, in one-letter code: Esterase dbaE (278 aa).

Active-site charge relay system residues include S124, D220, and H248.

This sequence belongs to the LovG family.

It functions in the pathway secondary metabolite biosynthesis. In terms of biological role, esterase; part of the gene cluster that mediates the biosynthesis of the antibiotic 2,4-dihydroxy-3-methyl-6-(2-oxopropyl)benzaldehyde (DHMBA) and its derivatives. The direct non-reducing polyketide synthase dbaI product is 2,4-dihydroxy-3-methyl-6-(2-oxopropyl)benzaldehyde (DHMBA), produced by condensation of one acetyl-CoA starter unit with 4 malonyl-CoA units and one methylation step. The FAD-dependent monooxygenase dbaH is responsible for the synthesis of yellow pigments derived from the oxidation of DHMBA. The roles of dbaB, C, E and F have still to be determined. The polypeptide is Esterase dbaE (Emericella nidulans (strain FGSC A4 / ATCC 38163 / CBS 112.46 / NRRL 194 / M139) (Aspergillus nidulans)).